We begin with the raw amino-acid sequence, 625 residues long: Serine/threonine-protein kinase PknB (625 aa).

At 1–331 (MTTPQHLSDR…KQRSTSVARW (331 aa)) the chain is on the cytoplasmic side. Residues 11-274 (YELGEILGFG…TAAEMRADLI (264 aa)) enclose the Protein kinase domain. ATP is bound by residues 17–25 (LGFGGMSEV), lysine 40, and 93–95 (EYV). Aspartate 138 (proton acceptor) is an active-site residue. Residues 140-143 (KPAN) and aspartate 156 contribute to the ATP site. Residues asparagine 143 and aspartate 156 each coordinate Mg(2+). Phosphoserine; by autocatalysis is present on serine 169. Residues threonine 171, threonine 173, and threonine 294 each carry the phosphothreonine; by autocatalysis modification. Serine 295 is modified (phosphoserine; by autocatalysis). Residues 302–321 (ADRAGAATQDMPVPRPAGYS) form a disordered region. Threonine 309 is modified (phosphothreonine; by autocatalysis). The chain crosses the membrane as a helical span at residues 332–352 (LIAVAVLAVLTVVVTVAINMV). The Extracellular portion of the chain corresponds to 353 to 625 (GGNPRNVQVP…DAKITLSFAA (273 aa)). 4 consecutive PASTA domains span residues 355–421 (NPRN…NVST), 422–489 (GPEQ…VVGA), 490–556 (GPED…RVSK), and 557–625 (GNQF…SFAA). Positions 591 to 612 (DVRDSGQRTNAVVTQSPSAGTP) are disordered. The span at 597–611 (QRTNAVVTQSPSAGT) shows a compositional bias: polar residues.

This sequence belongs to the protein kinase superfamily. Ser/Thr protein kinase family. As to quaternary structure, homodimer. Post-translationally, autophosphorylated. Dephosphorylated by PstP.

Its subcellular location is the cell membrane. The catalysed reaction is L-seryl-[protein] + ATP = O-phospho-L-seryl-[protein] + ADP + H(+). It catalyses the reaction L-threonyl-[protein] + ATP = O-phospho-L-threonyl-[protein] + ADP + H(+). By K-252a. In terms of biological role, protein kinase that regulates many aspects of mycobacterial physiology. Is a key component of a signal transduction pathway that regulates cell growth, cell shape and cell division via phosphorylation of target proteins. Probably phosphorylates RseA. The protein is Serine/threonine-protein kinase PknB (pknB) of Mycolicibacterium smegmatis (strain ATCC 700084 / mc(2)155) (Mycobacterium smegmatis).